Reading from the N-terminus, the 215-residue chain is Imidazole glycerol phosphate synthase subunit HisH (215 aa).

Residues 3-215 (TAVVFDYGFG…QLLKNWIATL (213 aa)) enclose the Glutamine amidotransferase type-1 domain. C81 (nucleophile) is an active-site residue. Active-site residues include H196 and E198.

Heterodimer of HisH and HisF.

Its subcellular location is the cytoplasm. It catalyses the reaction 5-[(5-phospho-1-deoxy-D-ribulos-1-ylimino)methylamino]-1-(5-phospho-beta-D-ribosyl)imidazole-4-carboxamide + L-glutamine = D-erythro-1-(imidazol-4-yl)glycerol 3-phosphate + 5-amino-1-(5-phospho-beta-D-ribosyl)imidazole-4-carboxamide + L-glutamate + H(+). The catalysed reaction is L-glutamine + H2O = L-glutamate + NH4(+). Its pathway is amino-acid biosynthesis; L-histidine biosynthesis; L-histidine from 5-phospho-alpha-D-ribose 1-diphosphate: step 5/9. IGPS catalyzes the conversion of PRFAR and glutamine to IGP, AICAR and glutamate. The HisH subunit catalyzes the hydrolysis of glutamine to glutamate and ammonia as part of the synthesis of IGP and AICAR. The resulting ammonia molecule is channeled to the active site of HisF. The sequence is that of Imidazole glycerol phosphate synthase subunit HisH from Bifidobacterium longum (strain NCC 2705).